The primary structure comprises 322 residues: ATP-dependent 6-phosphofructokinase (322 aa).

An ATP-binding site is contributed by Gly11. ADP is bound at residue 21 to 25; sequence RAVAR. Residues 72-73 and 102-105 each bind ATP; these read RY and GDGS. Asp103 is a binding site for Mg(2+). 125–127 contacts substrate; sequence TID. Asp127 (proton acceptor) is an active-site residue. Arg154 contacts ADP. Residues Arg162 and 169–171 contribute to the substrate site; that span reads MGR. Residues 185 to 187 and 213 to 215 each bind ADP; these read GAD and KDY. Residues Glu222, Arg246, and 252–255 contribute to the substrate site; that span reads HVQR.

This sequence belongs to the phosphofructokinase type A (PFKA) family. ATP-dependent PFK group I subfamily. Prokaryotic clade 'B1' sub-subfamily. Homotetramer. Requires Mg(2+) as cofactor.

It is found in the cytoplasm. It catalyses the reaction beta-D-fructose 6-phosphate + ATP = beta-D-fructose 1,6-bisphosphate + ADP + H(+). It functions in the pathway carbohydrate degradation; glycolysis; D-glyceraldehyde 3-phosphate and glycerone phosphate from D-glucose: step 3/4. Its activity is regulated as follows. Allosterically activated by ADP and other diphosphonucleosides, and allosterically inhibited by phosphoenolpyruvate. Functionally, catalyzes the phosphorylation of D-fructose 6-phosphate to fructose 1,6-bisphosphate by ATP, the first committing step of glycolysis. This chain is ATP-dependent 6-phosphofructokinase, found in Pediococcus pentosaceus (strain ATCC 25745 / CCUG 21536 / LMG 10740 / 183-1w).